Here is a 178-residue protein sequence, read N- to C-terminus: Large ribosomal subunit protein uL10 (178 aa).

This sequence belongs to the universal ribosomal protein uL10 family. In terms of assembly, part of the ribosomal stalk of the 50S ribosomal subunit. The N-terminus interacts with L11 and the large rRNA to form the base of the stalk. The C-terminus forms an elongated spine to which L12 dimers bind in a sequential fashion forming a multimeric L10(L12)X complex.

In terms of biological role, forms part of the ribosomal stalk, playing a central role in the interaction of the ribosome with GTP-bound translation factors. This Petrotoga mobilis (strain DSM 10674 / SJ95) protein is Large ribosomal subunit protein uL10.